Consider the following 258-residue polypeptide: Fibroblast growth factor-binding protein 3 (258 aa).

Positions 1–26 are cleaved as a signal peptide; it reads MTPPKLRASLSPSLLLLLSGCLLAAA. 2 disulfides stabilise this stretch: C59–C80 and C90–C124. The disordered stretch occupies residues 146–231; that stretch reads RLVPRASPPA…GTGPDPDGLD (86 aa). A compositionally biased stretch (pro residues) spans 186–197; sequence GTPPPQSAPPKE. The segment covering 198 to 209 has biased composition (basic and acidic residues); it reads NPSERKTNEGKR. C241 and C249 are oxidised to a cystine.

This sequence belongs to the fibroblast growth factor-binding protein family. As to quaternary structure, interacts with FGF2.

It localises to the secreted. In terms of biological role, heparin-binding protein which binds to FGF2, prevents binding of FGF2 to heparin and probably inhibits immobilization of FGF2 on extracellular matrix glycosaminoglycans, allowing its release and subsequent activation of FGFR signaling which leads to increased vascular permeability. The chain is Fibroblast growth factor-binding protein 3 (FGFBP3) from Homo sapiens (Human).